The chain runs to 363 residues: Chemerin-like receptor 1 (363 aa).

Residues 1 to 39 lie on the Extracellular side of the membrane; the sequence is MDFEDYNSTYEDSYTDDFDTIVALEEFSPLEGRVVRIFL. N-linked (GlcNAc...) asparagine glycosylation occurs at Asn-7. The chain crosses the membrane as a helical span at residues 40–60; it reads VVVYSIICFLGILGNGLVIVI. At 61-71 the chain is on the cytoplasmic side; the sequence is ATFKMKKTVNT. The helical transmembrane segment at 72 to 92 threads the bilayer; it reads VWFLNLAVADFLFNVFLPIHI. The Extracellular segment spans residues 93 to 109; it reads AYAAMDYHWVFGTAMCK. An intrachain disulfide couples Cys-108 to Cys-185. Residues 110–130 form a helical membrane-spanning segment; the sequence is ISNFLLIHNMYTSVFLLTVIS. Over 131-152 the chain is Cytoplasmic; that stretch reads FDRCISVLLPVWSQNHRSIRLA. Residues 153–173 traverse the membrane as a helical segment; it reads YMACVVIWVLAFFLSSPSLVF. At 174-220 the chain is on the extracellular side; sequence RDTAHLHGKISCFNNFSLSATSSSSWPTHPQMDTVGFGRQMVVTITR. Residue Asn-188 is glycosylated (N-linked (GlcNAc...) asparagine). A helical membrane pass occupies residues 221-241; it reads FLCGFLVPVLIISACYFTIVY. Residues 242–256 are Cytoplasmic-facing; that stretch reads KLRRNRLAKTKKPFK. Residues 257 to 277 traverse the membrane as a helical segment; it reads IIVTIIITFFLCWCPYHTLYL. The Extracellular portion of the chain corresponds to 278-283; that stretch reads LELHHR. Residues 284–304 traverse the membrane as a helical segment; that stretch reads AMPGSVFSLGVPLATAIAIAN. Topologically, residues 305-363 are cytoplasmic; that stretch reads SCMNPILYVFMGQDFKKFKVALFSRLVNALSEDTGHSSYPSHRSFTKMSSMNERETSML. The residue at position 335 (Ser-335) is a Phosphoserine. Residues 337 to 363 are disordered; that stretch reads DTGHSSYPSHRSFTKMSSMNERETSML. Residue Thr-338 is modified to Phosphothreonine. Residues 340–355 show a composition bias toward polar residues; it reads HSSYPSHRSFTKMSSM. Ser-345, Ser-348, and Ser-354 each carry phosphoserine.

It belongs to the chemokine-like receptor (CMKLR) family. Predominantly expressed in spleen and temperately in adipose tissue.

The protein localises to the cell membrane. In terms of biological role, receptor for the chemoattractant adipokine chemerin/RARRES2 and for the omega-3 fatty acid derived molecule resolvin E1. Interaction with RARRES2 initiates activation of G proteins G(i)/G(o) and beta-arrestin pathways inducing cellular responses via second messenger pathways such as intracellular calcium mobilization, phosphorylation of MAP kinases MAPK1/MAPK3 (ERK1/2), TYRO3, MAPK14/P38MAPK and PI3K leading to multifunctional effects, like, reduction of immune responses, enhancing of adipogenesis and angionesis. Resolvin E1 down-regulates cytokine production in macrophages by reducing the activation of MAPK1/3 (ERK1/2) and NF-kappa-B. Positively regulates adipogenesis and adipocyte metabolism. The protein is Chemerin-like receptor 1 (CMLKR1) of Sus scrofa (Pig).